The following is a 123-amino-acid chain: Ribosome-binding factor A (123 aa).

It belongs to the RbfA family. As to quaternary structure, monomer. Binds 30S ribosomal subunits, but not 50S ribosomal subunits or 70S ribosomes.

It is found in the cytoplasm. Its function is as follows. One of several proteins that assist in the late maturation steps of the functional core of the 30S ribosomal subunit. Associates with free 30S ribosomal subunits (but not with 30S subunits that are part of 70S ribosomes or polysomes). Required for efficient processing of 16S rRNA. May interact with the 5'-terminal helix region of 16S rRNA. The chain is Ribosome-binding factor A from Neisseria meningitidis serogroup B (strain ATCC BAA-335 / MC58).